A 261-amino-acid chain; its full sequence is Major biofilm matrix component (261 aa).

A signal peptide spans 1–27 (MGMKKKLSLGVASAALGLALVGGGTWA). The disordered stretch occupies residues 241-261 (DHTDKDGYVKENEKAHSEDKN).

Belongs to the peptidase M73 family. Forms fibers. Fibers have variable length and are 10-15 nm width. Interacts with obg (AC P20964) in pull-down experiments.

The protein resides in the secreted. It localises to the forespore intermembrane space. TasA is the major protein component of the biofilm extracellular matrix. It forms amyloid fibers that bind cells together in the biofilm. Exhibits an antibacterial activity against a variety of Gram-positive and Gram-negative bacteria. In laboratory strains, is also involved in proper spore coat assembly. The protein is Major biofilm matrix component of Bacillus subtilis (strain 168).